The primary structure comprises 180 residues: Alkyl hydroperoxide reductase AhpD (180 aa).

Catalysis depends on cysteine 131, which acts as the Proton donor. An intrachain disulfide couples cysteine 131 to cysteine 134. Cysteine 134 serves as the catalytic Cysteine sulfenic acid (-SOH) intermediate.

The protein belongs to the AhpD family.

The enzyme catalyses N(6)-[(R)-dihydrolipoyl]-L-lysyl-[lipoyl-carrier protein] + a hydroperoxide = N(6)-[(R)-lipoyl]-L-lysyl-[lipoyl-carrier protein] + an alcohol + H2O. Antioxidant protein with alkyl hydroperoxidase activity. Required for the reduction of the AhpC active site cysteine residues and for the regeneration of the AhpC enzyme activity. The polypeptide is Alkyl hydroperoxide reductase AhpD (Hyphomonas neptunium (strain ATCC 15444)).